The sequence spans 139 residues: FAD synthase (139 aa).

ATP contacts are provided by residues 9-10, 14-17, and aspartate 92; these read TF and HPGH.

Belongs to the archaeal FAD synthase family. Homodimer. A divalent metal cation serves as cofactor.

The enzyme catalyses FMN + ATP + H(+) = FAD + diphosphate. It participates in cofactor biosynthesis; FAD biosynthesis; FAD from FMN: step 1/1. Functionally, catalyzes the transfer of the AMP portion of ATP to flavin mononucleotide (FMN) to produce flavin adenine dinucleotide (FAD) coenzyme. The polypeptide is FAD synthase (Methanosarcina barkeri (strain Fusaro / DSM 804)).